Reading from the N-terminus, the 528-residue chain is Na(+)/H(+) antiporter NhaB (528 aa).

11 helical membrane passes run 23 to 45 (FAIL…VAGW), 66 to 86 (PGGL…SQVL), 95 to 115 (VLLL…LLLF), 139 to 159 (AFLS…AVAV), 203 to 223 (LLMH…VGEP), 241 to 261 (LRMS…CFLV), 310 to 330 (LIIG…SVII), 349 to 369 (EEAL…GVII), 390 to 410 (LVIF…VFVG), 448 to 468 (ATPN…APLI), and 476 to 496 (VWMA…AIQF).

It belongs to the NhaB Na(+)/H(+) (TC 2.A.34) antiporter family.

It localises to the cell inner membrane. It carries out the reaction 2 Na(+)(in) + 3 H(+)(out) = 2 Na(+)(out) + 3 H(+)(in). Functionally, na(+)/H(+) antiporter that extrudes sodium in exchange for external protons. This is Na(+)/H(+) antiporter NhaB from Shewanella piezotolerans (strain WP3 / JCM 13877).